Consider the following 1188-residue polypeptide: DNA-directed RNA polymerase subunit beta (1188 aa).

Belongs to the RNA polymerase beta chain family. As to quaternary structure, the RNAP catalytic core consists of 2 alpha, 1 beta, 1 beta' and 1 omega subunit. When a sigma factor is associated with the core the holoenzyme is formed, which can initiate transcription.

The enzyme catalyses RNA(n) + a ribonucleoside 5'-triphosphate = RNA(n+1) + diphosphate. Functionally, DNA-dependent RNA polymerase catalyzes the transcription of DNA into RNA using the four ribonucleoside triphosphates as substrates. In Streptococcus pyogenes serotype M3 (strain ATCC BAA-595 / MGAS315), this protein is DNA-directed RNA polymerase subunit beta.